We begin with the raw amino-acid sequence, 104 residues long: Large ribosomal subunit protein uL24 (104 aa).

Belongs to the universal ribosomal protein uL24 family. Part of the 50S ribosomal subunit.

In terms of biological role, one of two assembly initiator proteins, it binds directly to the 5'-end of the 23S rRNA, where it nucleates assembly of the 50S subunit. Functionally, one of the proteins that surrounds the polypeptide exit tunnel on the outside of the subunit. This Clostridium botulinum (strain Eklund 17B / Type B) protein is Large ribosomal subunit protein uL24.